We begin with the raw amino-acid sequence, 585 residues long: Glycerol-3-phosphate dehydrogenase 2 (585 aa).

Position 37–65 (37–65 (DVVVIGGGVVGSGCALDAATRGLKVALVE)) interacts with FAD.

The protein belongs to the FAD-dependent glycerol-3-phosphate dehydrogenase family. Requires FAD as cofactor.

The protein resides in the cytoplasm. The catalysed reaction is a quinone + sn-glycerol 3-phosphate = dihydroxyacetone phosphate + a quinol. The protein is Glycerol-3-phosphate dehydrogenase 2 (glpD2) of Mycobacterium bovis (strain ATCC BAA-935 / AF2122/97).